A 542-amino-acid chain; its full sequence is Adenosylmethionine-8-amino-7-oxononanoate aminotransferase (542 aa).

170 to 171 (GS) is a pyridoxal 5'-phosphate binding site. Y205 serves as a coordination point for substrate. D311 contacts pyridoxal 5'-phosphate. Substrate contacts are provided by K340, G375, and R470. At K340 the chain carries N6-(pyridoxal phosphate)lysine. Residues 509–542 (DGGLWTKRPDGPDNPDKANTPDTPDGARTGETVV) are disordered. Basic and acidic residues predominate over residues 515 to 524 (KRPDGPDNPD).

Belongs to the class-III pyridoxal-phosphate-dependent aminotransferase family. BioA subfamily. As to quaternary structure, homodimer. The cofactor is pyridoxal 5'-phosphate.

The protein resides in the cytoplasm. The catalysed reaction is (8S)-8-amino-7-oxononanoate + S-adenosyl-L-methionine = S-adenosyl-4-methylsulfanyl-2-oxobutanoate + (7R,8S)-7,8-diammoniononanoate. The protein operates within cofactor biosynthesis; biotin biosynthesis; 7,8-diaminononanoate from 8-amino-7-oxononanoate (SAM route): step 1/1. Catalyzes the transfer of the alpha-amino group from S-adenosyl-L-methionine (SAM) to 7-keto-8-aminopelargonic acid (KAPA) to form 7,8-diaminopelargonic acid (DAPA). It is the only aminotransferase known to utilize SAM as an amino donor. This Nitratidesulfovibrio vulgaris (strain ATCC 29579 / DSM 644 / CCUG 34227 / NCIMB 8303 / VKM B-1760 / Hildenborough) (Desulfovibrio vulgaris) protein is Adenosylmethionine-8-amino-7-oxononanoate aminotransferase.